A 456-amino-acid polypeptide reads, in one-letter code: Bifunctional protein GlmU (456 aa).

The segment at 1-229 (MLNNAMSVVI…LSEVEGVNNR (229 aa)) is pyrophosphorylase. UDP-N-acetyl-alpha-D-glucosamine is bound by residues 11-14 (LAAG), K25, Q76, 81-82 (GT), 103-105 (YGD), G140, E154, N169, and N227. Position 105 (D105) interacts with Mg(2+). Mg(2+) is bound at residue N227. Positions 230-250 (LQLSRLERVYQSEQAEKLLLA) are linker. The N-acetyltransferase stretch occupies residues 251-456 (GVMLRDPARF…EGWRRPVKKK (206 aa)). UDP-N-acetyl-alpha-D-glucosamine-binding residues include R333 and K351. Catalysis depends on H363, which acts as the Proton acceptor. Positions 366 and 377 each coordinate UDP-N-acetyl-alpha-D-glucosamine. Acetyl-CoA-binding positions include A380, 386–387 (NY), S405, A423, and R440.

The protein in the N-terminal section; belongs to the N-acetylglucosamine-1-phosphate uridyltransferase family. It in the C-terminal section; belongs to the transferase hexapeptide repeat family. In terms of assembly, homotrimer. It depends on Mg(2+) as a cofactor.

It localises to the cytoplasm. The enzyme catalyses alpha-D-glucosamine 1-phosphate + acetyl-CoA = N-acetyl-alpha-D-glucosamine 1-phosphate + CoA + H(+). It catalyses the reaction N-acetyl-alpha-D-glucosamine 1-phosphate + UTP + H(+) = UDP-N-acetyl-alpha-D-glucosamine + diphosphate. Its pathway is nucleotide-sugar biosynthesis; UDP-N-acetyl-alpha-D-glucosamine biosynthesis; N-acetyl-alpha-D-glucosamine 1-phosphate from alpha-D-glucosamine 6-phosphate (route II): step 2/2. It participates in nucleotide-sugar biosynthesis; UDP-N-acetyl-alpha-D-glucosamine biosynthesis; UDP-N-acetyl-alpha-D-glucosamine from N-acetyl-alpha-D-glucosamine 1-phosphate: step 1/1. The protein operates within bacterial outer membrane biogenesis; LPS lipid A biosynthesis. Its function is as follows. Catalyzes the last two sequential reactions in the de novo biosynthetic pathway for UDP-N-acetylglucosamine (UDP-GlcNAc). The C-terminal domain catalyzes the transfer of acetyl group from acetyl coenzyme A to glucosamine-1-phosphate (GlcN-1-P) to produce N-acetylglucosamine-1-phosphate (GlcNAc-1-P), which is converted into UDP-GlcNAc by the transfer of uridine 5-monophosphate (from uridine 5-triphosphate), a reaction catalyzed by the N-terminal domain. This chain is Bifunctional protein GlmU, found in Escherichia coli O127:H6 (strain E2348/69 / EPEC).